The chain runs to 273 residues: uncharacterized protein (273 aa).

A helical transmembrane segment spans residues 7–25; sequence FFRWAFLIATVYVAYYFLV. 2 disordered regions span residues 34–154 and 168–273; these read KPQK…LKMK and LHNS…DSLW. The segment covering 36-54 has biased composition (basic residues); that stretch reads QKSKLTKLGKQKQRQKQKN. Over residues 55 to 91 the composition is skewed to basic and acidic residues; the sequence is TKKDTLVNRETPSKKSQKLETSDALKSKSKDSSKKEP. A compositionally biased stretch (low complexity) spans 92 to 101; it reads VVVPKKGTPK. Over residues 115–144 the composition is skewed to basic and acidic residues; the sequence is PKKEKLVGKNPAEKEDTTDVEDTQKLEQKH. The segment covering 145–154 has biased composition (polar residues); it reads STTPSSLKMK. The span at 201 to 212 shows a compositional bias: basic residues; the sequence is KRQRQNQQKKLR. Residues 213-240 show a composition bias toward basic and acidic residues; the sequence is AKEMQELADEEQRRRLAAHRKELHEANR. Positions 245 to 266 are enriched in polar residues; that stretch reads LNNSSRSAYSYINNGQAGSSKG.

Its subcellular location is the cytoplasm. It localises to the membrane. This is an uncharacterized protein from Schizosaccharomyces pombe (strain 972 / ATCC 24843) (Fission yeast).